The primary structure comprises 320 residues: Putative membrane-bound redox modulator Alx (320 aa).

Topologically, residues 1–6 are periplasmic; it reads MNTVGT. The chain crosses the membrane as a helical span at residues 7–27; sequence PLLWGGFAVVVAIMLAIDLLL. At 28 to 43 the chain is on the cytoplasmic side; the sequence is QGRRGAHAMTMKQAAA. The chain crosses the membrane as a helical span at residues 44-64; that stretch reads WSLVWVTLSLLFNAAFWWYLV. Residues 65–89 are Periplasmic-facing; sequence QTEGRAVADPQALAFLTGYLIEKSL. Residues 90–110 traverse the membrane as a helical segment; the sequence is AVDNVFVWLMLFSYFSVPAAL. At 111-113 the chain is on the cytoplasmic side; that stretch reads QRR. Residues 114-134 traverse the membrane as a helical segment; sequence VLVYGVLGAIVLRTIMIFTGS. Tryptophan 135 is a topological domain (periplasmic). Residues 136–156 traverse the membrane as a helical segment; the sequence is LISQFDWILYIFGAFLLFTGV. Topologically, residues 157–198 are cytoplasmic; that stretch reads KMALAHEDESGIGDKPLVRWLRGHLRMTDTIDNEHFFVRKNG. The chain crosses the membrane as a helical span at residues 199 to 219; it reads LLYATPLMLVLILVELSDVIF. The Periplasmic portion of the chain corresponds to 220–225; sequence AVDSIP. A helical membrane pass occupies residues 226–246; it reads AIFAVTTDPFIVLTSNLFAIL. Residues 247–261 are Cytoplasmic-facing; it reads GLRAMYFLLAGVAER. The helical transmembrane segment at 262-282 threads the bilayer; the sequence is FSMLKYGLAVILVFIGIKMLI. Topologically, residues 283–286 are periplasmic; that stretch reads VDFY. Residues 287 to 307 traverse the membrane as a helical segment; sequence HIPIAVSLGVVFGILVMTFII. Topologically, residues 308-320 are cytoplasmic; that stretch reads NAWVNYRHDKQRG.

The protein belongs to the TerC family.

It localises to the cell inner membrane. Has been proposed to be a redox modulator. This is Putative membrane-bound redox modulator Alx (alx) from Shigella flexneri.